Here is a 221-residue protein sequence, read N- to C-terminus: Oxaloacetate tautomerase FAHD1, mitochondrial (221 aa).

A mitochondrion-targeting transit peptide spans 1-24 (MASTKPLSRFWEWGKNIVCVGRNY). Serine 37 carries the post-translational modification Phosphoserine. Mg(2+)-binding residues include glutamate 68, glutamate 70, and aspartate 99. Lysine 110 is modified (N6-acetyllysine). N6-succinyllysine is present on lysine 112.

It belongs to the FAH family. Homodimer. It depends on Mg(2+) as a cofactor. Mn(2+) serves as cofactor.

The protein resides in the mitochondrion. It is found in the cytoplasm. Its subcellular location is the cytosol. The enzyme catalyses oxaloacetate = enol-oxaloacetate. It catalyses the reaction oxaloacetate + H(+) = pyruvate + CO2. It carries out the reaction a 3-acylpyruvate + H2O = a carboxylate + pyruvate + H(+). The catalysed reaction is acetylpyruvate + H2O = acetate + pyruvate + H(+). The enzyme catalyses 3-fumarylpyruvate + H2O = fumarate + pyruvate + H(+). Oxaloacetate decarboxylation is competitively inhibited by oxalate. Its function is as follows. Tautomerase that converts enol-oxaloacetate, a strong inhibitor of succinate dehydrogenase, to the physiological keto form of oxaloacetate. It is thereby required to maximize aerobic respiration efficiency by preventing succinate dehydrogenase inhibition. Also acts as a weak oxaloacetate decarboxylase (ODx), catalyzing the decarboxylation of oxaloacetate (OAA) to pyruvate and CO(2), and as such is likely a regulatory enzyme in the TCA cycle. Also displays acylpyruvase activity, being able to hydrolyze acetylpyruvate and fumarylpyruvate in vitro. The sequence is that of Oxaloacetate tautomerase FAHD1, mitochondrial from Rattus norvegicus (Rat).